Consider the following 156-residue polypeptide: SsrA-binding protein (156 aa).

The interval 131 to 156 (YDKRQTLREQQDKREALRVMRERNRG) is disordered.

Belongs to the SmpB family.

The protein localises to the cytoplasm. Functionally, required for rescue of stalled ribosomes mediated by trans-translation. Binds to transfer-messenger RNA (tmRNA), required for stable association of tmRNA with ribosomes. tmRNA and SmpB together mimic tRNA shape, replacing the anticodon stem-loop with SmpB. tmRNA is encoded by the ssrA gene; the 2 termini fold to resemble tRNA(Ala) and it encodes a 'tag peptide', a short internal open reading frame. During trans-translation Ala-aminoacylated tmRNA acts like a tRNA, entering the A-site of stalled ribosomes, displacing the stalled mRNA. The ribosome then switches to translate the ORF on the tmRNA; the nascent peptide is terminated with the 'tag peptide' encoded by the tmRNA and targeted for degradation. The ribosome is freed to recommence translation, which seems to be the essential function of trans-translation. This chain is SsrA-binding protein, found in Arthrobacter sp. (strain FB24).